The following is a 390-amino-acid chain: Flap endonuclease 1 (390 aa).

Positions 1–111 (MGIKGLAKLL…GELLKRREKR (111 aa)) are N-domain. Position 34 (aspartate 34) interacts with Mg(2+). The DNA site is built by arginine 47 and arginine 77. The Mg(2+) site is built by aspartate 93, glutamate 165, glutamate 167, aspartate 186, and aspartate 188. The segment at 129–260 (EQDKQSKRLV…KTALKLIREH (132 aa)) is I-domain. Glutamate 165 is a binding site for DNA. Positions 238 and 240 each coordinate DNA. Aspartate 240 is a binding site for Mg(2+). Residues 342–390 (KPQSRMDSFFKVKANPEGDKKKAEKRKAELAASRGKGKKGKGGGGFKKK) form a disordered region. The segment at 343-351 (PQSRMDSFF) is interaction with PCNA. Residues 349 to 370 (SFFKVKANPEGDKKKAEKRKAE) show a composition bias toward basic and acidic residues. Positions 376 to 390 (GKGKKGKGGGGFKKK) are enriched in basic residues.

It belongs to the XPG/RAD2 endonuclease family. FEN1 subfamily. In terms of assembly, interacts with PCNA. Three molecules of FEN1 bind to one PCNA trimer with each molecule binding to one PCNA monomer. PCNA stimulates the nuclease activity without altering cleavage specificity. Mg(2+) is required as a cofactor. Post-translationally, phosphorylated. Phosphorylation upon DNA damage induces relocalization to the nuclear plasma.

It localises to the nucleus. It is found in the nucleolus. Its subcellular location is the nucleoplasm. The protein localises to the mitochondrion. Structure-specific nuclease with 5'-flap endonuclease and 5'-3' exonuclease activities involved in DNA replication and repair. During DNA replication, cleaves the 5'-overhanging flap structure that is generated by displacement synthesis when DNA polymerase encounters the 5'-end of a downstream Okazaki fragment. It enters the flap from the 5'-end and then tracks to cleave the flap base, leaving a nick for ligation. Also involved in the long patch base excision repair (LP-BER) pathway, by cleaving within the apurinic/apyrimidinic (AP) site-terminated flap. Acts as a genome stabilization factor that prevents flaps from equilibrating into structures that lead to duplications and deletions. Also possesses 5'-3' exonuclease activity on nicked or gapped double-stranded DNA, and exhibits RNase H activity. Also involved in replication and repair of rDNA and in repairing mitochondrial DNA. In Thalassiosira pseudonana (Marine diatom), this protein is Flap endonuclease 1.